We begin with the raw amino-acid sequence, 608 residues long: Kinetochore protein NUF2 (608 aa).

Positions isoleucine 121 to arginine 125 are required for nuclear localization and function. Coiled coils occupy residues phenylalanine 176–leucine 319 and arginine 358–glutamate 460.

The protein belongs to the NUF2 family.

The protein resides in the chromosome. It localises to the centromere. Its subcellular location is the kinetochore. In terms of biological role, required for anchoring centrosomal cores to the nuclear periphery. Plays a role in chromosome segregation but is dispensable for centromere clustering. The protein is Kinetochore protein NUF2 of Toxoplasma gondii (strain ATCC 50611 / Me49).